We begin with the raw amino-acid sequence, 1228 residues long: P3N-PIPO polyprotein (1228 aa).

Positions 408–547 constitute a Peptidase S30 domain; the sequence is IVGNSKINYI…RSVYAKMDQY (140 aa). Active-site for P1 proteinase activity residues include His456, Asp465, and Ser499. The Involved in interaction with stylet and aphid transmission signature appears at 598–601; that stretch reads KITC. The Involved in virions binding and aphid transmission signature appears at 856 to 858; it reads PTK. Positions 882-1004 constitute a Peptidase C6 domain; that stretch reads MYIAKKGYCY…DSEMKHYIVG (123 aa). Catalysis depends on for helper component proteinase activity residues Cys890 and His963.

The protein belongs to the potyviridae P3N-PIPO polyprotein family. As to quaternary structure, interacts (via PIPO domain) with host PCaP1 protein; this interaction may help to anchor the movement complex to the plasma membrane from which the complex could move to the plasmodesmata. In terms of processing, potyviral RNA is expressed as two polyproteins which undergo post-translational proteolytic processing. Genome polyprotein is processed by NIa-pro, P1 and HC-pro proteinases resulting in the production of at least ten individual proteins. P3N-PIPO is cleaved by P1 and HC-pro proteinases resulting in the production of three individual proteins. The P1 proteinase and the HC-pro cleave only their respective C-termini autocatalytically.

The protein localises to the host cell junction. The protein resides in the host plasmodesma. The catalysed reaction is Hydrolyzes a Gly-|-Gly bond at its own C-terminus, commonly in the sequence -Tyr-Xaa-Val-Gly-|-Gly, in the processing of the potyviral polyprotein.. Its function is as follows. Required for aphid transmission and also has proteolytic activity. Only cleaves a Gly-Gly dipeptide at its own C-terminus. Interacts with virions and aphid stylets. Acts as a suppressor of RNA-mediated gene silencing, also known as post-transcriptional gene silencing (PTGS), a mechanism of plant viral defense that limits the accumulation of viral RNAs. May have RNA-binding activity. Functionally, allows efficient cell to cell propagation, by bypassing the host cell wall barrier. Transports viral genome to neighboring plant cells directly through plasmosdesmata, without any budding. The sequence is that of P3N-PIPO polyprotein from Carica papaya (Papaya).